We begin with the raw amino-acid sequence, 90 residues long: MLEFLTRLFSKDGGSKNVAKERLRLVLVHDRTSISPQLLETLKAELIKVISNYMEIDEAALEVSLDSSGNTVALVASIPVKGMKRVAGTA.

It belongs to the MinE family.

Prevents the cell division inhibition by proteins MinC and MinD at internal division sites while permitting inhibition at polar sites. This ensures cell division at the proper site by restricting the formation of a division septum at the midpoint of the long axis of the cell. This is Cell division topological specificity factor from Pelotomaculum thermopropionicum (strain DSM 13744 / JCM 10971 / SI).